The following is a 604-amino-acid chain: Protein CBFA2T2 (604 aa).

The tract at residues 25–105 (KRVPAMPGSP…SSTSSALTNQ (81 aa)) is disordered. S33 is subject to Phosphoserine. K38 participates in a covalent cross-link: Glycyl lysine isopeptide (Lys-Gly) (interchain with G-Cter in SUMO2). Over residues 46-59 (PTMPPLPPINPGGP) the composition is skewed to pro residues. 2 stretches are compositionally biased toward polar residues: residues 64-79 (FTPTALSNGINHSPPT) and 88-105 (QRFSNGPASSTSSALTNQ). Residues 107–215 (LPATCGARQL…QHEHLLLNTS (109 aa)) form an interaction with PRDM14 region. One can recognise a TAFH domain in the interval 113 to 208 (ARQLSKLKRF…TPSQYLAQHE (96 aa)). The segment at 229-265 (VHGNGKRPSPERREENSFDRDTIAPEPPAKRVCTISP) is disordered. Residues 236 to 251 (PSPERREENSFDRDTI) are compositionally biased toward basic and acidic residues. S264 is modified (phosphoserine). A nervy homology region 2 (NHR2) region spans residues 331–377 (QDELVDHRLTEREWADEWKHLDHALNCIMEMVEKTRRSMAVLRRCQE). Positions 397–427 (RKTGTELVSRQHSPGSADSLSNDSQREFNSR) are disordered. Over residues 402-419 (ELVSRQHSPGSADSLSND) the composition is skewed to polar residues. A Phosphoserine modification is found at S409. The tract at residues 435 to 484 (VEFWKKTEEAVNKVKIQAMSEVQKAVAEAEQKAFEVIATERARMEQTIAD) is nervy homology region 3 (NHR3). K449 participates in a covalent cross-link: Glycyl lysine isopeptide (Lys-Gly) (interchain with G-Cter in SUMO2). Residues 451 to 491 (QAMSEVQKAVAEAEQKAFEVIATERARMEQTIADVKRQAAE) adopt a coiled-coil conformation. Zn(2+)-binding residues include C507, C510, C518, C521, C527, C531, H539, and C543. An MYND-type zinc finger spans residues 507 to 543 (CWNCGRKASETCSGCNIARYCGSFCQHKDWERHHRLC). Residues 547 to 604 (LHGQSPHGQGRPLLPVGRGSSARSADCSVPSPALDKTSATTSRSSTPASVTAIDTNGL) form a disordered region. The residue at position 577 (S577) is a Phosphoserine. Positions 583 to 598 (TSATTSRSSTPASVTA) are enriched in low complexity.

Belongs to the CBFA2T family. In terms of assembly, homooligomer. Homotetramerization is mediated by nervy homology region 2. Can interact with RUNX1T1/CBFA2T1 and CBFA2T3/MTG16; heterotetramerization between members of the CBFA2T family is proposed. Forms a heterooligomer with the AML1-MTG8/ETO fusion protein. Interacts with PRDM14. Interacts with RBPJ, GFI1, TCF4. Interacts with TAL1 and CBFA2T3/MTG16; the heteromer with CBFA2T3/MTG16 may function in repression of TAL1. In terms of tissue distribution, ubiquitously expressed in fetal and adult tissues. Highly expressed in adult brain, heart, lung, kidney, lymph node, appendix, thymus, testis, uterus, small intestine, prostate and thymus.

The protein localises to the nucleus. Transcriptional corepressor which facilitates transcriptional repression via its association with DNA-binding transcription factors and recruitment of other corepressors and histone-modifying enzymes. Via association with PRDM14 is involved in regulation of embryonic stem cell (ESC) pluripotency. Involved in primordial germ cell (PCG) formation. Stabilizes PRDM14 and OCT4 on chromatin in a homooligomerization-dependent manner. Can repress the expression of MMP7 in a ZBTB33-dependent manner. May function as a complex with the chimeric protein RUNX1/AML1-CBFA2T1/MTG8 (AML1-MTG8/ETO fusion protein) which is produced in acute myeloid leukemia with the chromosomal translocation t(8;21). May thus be involved in the repression of AML1-dependent transcription and the induction of G-CSF/CSF3-dependent cell growth. May be a tumor suppressor gene candidate involved in myeloid tumors with the deletion of the 20q11 region. Through heteromerization with CBFA2T3/MTG16 may be involved in regulation of the proliferation and the differentiation of erythroid progenitors by repressing the expression of TAL1 target genes. Required for the maintenance of the secretory cell lineage in the small intestine. Can inhibit Notch signaling probably by association with RBPJ and may be involved in GFI1-mediated Paneth cell differentiation. The chain is Protein CBFA2T2 (CBFA2T2) from Homo sapiens (Human).